The sequence spans 366 residues: Chorismate synthase (366 aa).

Residues arginine 48 and arginine 54 each contribute to the NADP(+) site. Residues 125–127, 241–242, glycine 285, 300–304, and arginine 326 contribute to the FMN site; these read RSS, NA, and KPTSS.

This sequence belongs to the chorismate synthase family. As to quaternary structure, homotetramer. Requires FMNH2 as cofactor.

It catalyses the reaction 5-O-(1-carboxyvinyl)-3-phosphoshikimate = chorismate + phosphate. The protein operates within metabolic intermediate biosynthesis; chorismate biosynthesis; chorismate from D-erythrose 4-phosphate and phosphoenolpyruvate: step 7/7. In terms of biological role, catalyzes the anti-1,4-elimination of the C-3 phosphate and the C-6 proR hydrogen from 5-enolpyruvylshikimate-3-phosphate (EPSP) to yield chorismate, which is the branch point compound that serves as the starting substrate for the three terminal pathways of aromatic amino acid biosynthesis. This reaction introduces a second double bond into the aromatic ring system. The sequence is that of Chorismate synthase from Cereibacter sphaeroides (strain ATCC 17023 / DSM 158 / JCM 6121 / CCUG 31486 / LMG 2827 / NBRC 12203 / NCIMB 8253 / ATH 2.4.1.) (Rhodobacter sphaeroides).